Consider the following 208-residue polypeptide: UPF0637 protein BCG9842_B1177 (208 aa).

It belongs to the UPF0637 family.

The sequence is that of UPF0637 protein BCG9842_B1177 from Bacillus cereus (strain G9842).